We begin with the raw amino-acid sequence, 151 residues long: Putative phosphatidylglycerol/phosphatidylinositol transfer protein 1 (151 aa).

The signal sequence occupies residues 1 to 26 (MKHSKNQIVYITFFIIILIVVKPIES).

The protein belongs to the NPC2 family. Monomer.

Its function is as follows. Catalyzes the intermembrane transfer of phosphatidylglycerol and phosphatidylinositol. This chain is Putative phosphatidylglycerol/phosphatidylinositol transfer protein 1, found in Dictyostelium discoideum (Social amoeba).